A 122-amino-acid chain; its full sequence is Putative iron-sulfur cluster insertion protein ErpA (122 aa).

Residues C50, C114, and C116 each contribute to the iron-sulfur cluster site.

Belongs to the HesB/IscA family. In terms of assembly, homodimer. Requires iron-sulfur cluster as cofactor.

In terms of biological role, required for insertion of 4Fe-4S clusters. This is Putative iron-sulfur cluster insertion protein ErpA from Bordetella petrii (strain ATCC BAA-461 / DSM 12804 / CCUG 43448).